A 373-amino-acid chain; its full sequence is NK1 transcription factor-related protein 1 (373 aa).

Disordered stretches follow at residues 49 to 74 (ALPA…TVHR), 149 to 231 (SDFT…RRAR), and 281 to 328 (KWKK…SMHT). Residues 53 to 63 (ESRETSPRHEP) show a composition bias toward basic and acidic residues. Residues 168–177 (EESSALTGNN) show a composition bias toward polar residues. The segment covering 196–210 (GQQTQQSSSNGQNHQ) has biased composition (low complexity). A DNA-binding region (homeobox) is located at residues 227 to 286 (PRRARTAFTYEQLVALENKFKSTRYLSVCERLNLALSLSLTETQVKIWFQNRRTKWKKQN). Positions 296-310 (SGGGGGNGPSNGLGG) are enriched in gly residues.

The protein belongs to the NK-1 homeobox family.

Its subcellular location is the nucleus. May participate in the energy homeostasis regulation. The chain is NK1 transcription factor-related protein 1 from Danio rerio (Zebrafish).